Here is a 156-residue protein sequence, read N- to C-terminus: MNVYNKADSFSLESDSIKDVIHDYICWLSMTDEMRPSIGNVFKAMETFKIDAVRYYDGNIYDLAKDINAMSFDSFIRSLQNISSKKDKLTVYGTMGLLSIVVDINKGCDISNIKFAAGIIILMEYIFDNTDMSHLKVALYRRIQRRYPIDDDEEDR.

Belongs to the orthopoxvirus OPG029 family. Interacts with host TANK, TBKBP1 and AZI2; these interactions prevent interferon production. Interacts with host STAT2.

In terms of biological role, prevents establishment of cellular antiviral state by blocking virus-induced phosphorylation and activation of interferon regulatory factors 3/IRF3 and 7/IRF7, transcription factors critical for the induction of interferons alpha and beta. This blockage is produced through the inhibition of host TBK1, by binding host TBK1 adapter proteins TBKBP1 and AZI2, thereby producing a strong inhibition of the phosphorylation and activation of IRF3 and IRF7. Also acts as an inhibitor of the cellular response to type I IFN by interacting with host STAT2. Mechanistically, exerts its inhibitory effect after host ISGF3 complex (composed of STAT1, STAT2 and IRF9) binding to the interferon stimulated response element (ISRE). The sequence is that of IFN signaling evasion protein OPG029 (OPG029) from Variola virus (isolate Human/India/Ind3/1967) (VARV).